A 561-amino-acid polypeptide reads, in one-letter code: Methionine--tRNA ligase (561 aa).

Positions 11–21 match the 'HIGH' region motif; sequence PYVNTVPHLGN. Zn(2+) contacts are provided by Cys-143, Cys-146, Cys-156, and Cys-159. An ATP-binding site is contributed by Lys-334.

Belongs to the class-I aminoacyl-tRNA synthetase family. MetG type 1 subfamily. The cofactor is Zn(2+).

The protein localises to the cytoplasm. The enzyme catalyses tRNA(Met) + L-methionine + ATP = L-methionyl-tRNA(Met) + AMP + diphosphate. Its function is as follows. Is required not only for elongation of protein synthesis but also for the initiation of all mRNA translation through initiator tRNA(fMet) aminoacylation. In Ignicoccus hospitalis (strain KIN4/I / DSM 18386 / JCM 14125), this protein is Methionine--tRNA ligase.